The chain runs to 616 residues: Dihydroxy-acid dehydratase (616 aa).

Asp-81 serves as a coordination point for Mg(2+). Cys-122 is a [2Fe-2S] cluster binding site. 2 residues coordinate Mg(2+): Asp-123 and Lys-124. Lys-124 carries the N6-carboxylysine modification. Residue Cys-195 coordinates [2Fe-2S] cluster. Mg(2+) is bound at residue Glu-491. The active-site Proton acceptor is Ser-517.

It belongs to the IlvD/Edd family. Homodimer. [2Fe-2S] cluster serves as cofactor. Mg(2+) is required as a cofactor.

The enzyme catalyses (2R)-2,3-dihydroxy-3-methylbutanoate = 3-methyl-2-oxobutanoate + H2O. It catalyses the reaction (2R,3R)-2,3-dihydroxy-3-methylpentanoate = (S)-3-methyl-2-oxopentanoate + H2O. It functions in the pathway amino-acid biosynthesis; L-isoleucine biosynthesis; L-isoleucine from 2-oxobutanoate: step 3/4. Its pathway is amino-acid biosynthesis; L-valine biosynthesis; L-valine from pyruvate: step 3/4. In terms of biological role, functions in the biosynthesis of branched-chain amino acids. Catalyzes the dehydration of (2R,3R)-2,3-dihydroxy-3-methylpentanoate (2,3-dihydroxy-3-methylvalerate) into 2-oxo-3-methylpentanoate (2-oxo-3-methylvalerate) and of (2R)-2,3-dihydroxy-3-methylbutanoate (2,3-dihydroxyisovalerate) into 2-oxo-3-methylbutanoate (2-oxoisovalerate), the penultimate precursor to L-isoleucine and L-valine, respectively. The sequence is that of Dihydroxy-acid dehydratase from Photorhabdus laumondii subsp. laumondii (strain DSM 15139 / CIP 105565 / TT01) (Photorhabdus luminescens subsp. laumondii).